We begin with the raw amino-acid sequence, 156 residues long: Small ribosomal subunit protein uS7 (156 aa).

This sequence belongs to the universal ribosomal protein uS7 family. As to quaternary structure, part of the 30S ribosomal subunit. Contacts proteins S9 and S11.

Its function is as follows. One of the primary rRNA binding proteins, it binds directly to 16S rRNA where it nucleates assembly of the head domain of the 30S subunit. Is located at the subunit interface close to the decoding center, probably blocks exit of the E-site tRNA. This is Small ribosomal subunit protein uS7 from Blochmanniella pennsylvanica (strain BPEN).